Here is a 117-residue protein sequence, read N- to C-terminus: Transcription elongation factor A protein-like 8 (117 aa).

The disordered stretch occupies residues 1 to 81 (MQKSCDENEG…PEEVIRGVDE (81 aa)). Over residues 41-81 (NVREETDGSLRGEPAEPSPEPKEDTPARHLNPEEVIRGVDE) the composition is skewed to basic and acidic residues. A coiled-coil region spans residues 73–100 (EEVIRGVDELERLREEIRRVRNKFVLMH).

The protein belongs to the TFS-II family. TFA subfamily. As to expression, highly expressed in kidney. Moderately expressed in heart and lung. Low expression in brain and liver. Expression is up-regulated in nephrectomized kidney.

The protein localises to the nucleus. In terms of biological role, may be involved in transcriptional regulation. This Rattus norvegicus (Rat) protein is Transcription elongation factor A protein-like 8 (Tceal8).